The following is a 426-amino-acid chain: Glutamate-1-semialdehyde 2,1-aminomutase (426 aa).

Lysine 265 is modified (N6-(pyridoxal phosphate)lysine).

It belongs to the class-III pyridoxal-phosphate-dependent aminotransferase family. HemL subfamily. In terms of assembly, homodimer. It depends on pyridoxal 5'-phosphate as a cofactor.

It localises to the cytoplasm. It catalyses the reaction (S)-4-amino-5-oxopentanoate = 5-aminolevulinate. It participates in porphyrin-containing compound metabolism; protoporphyrin-IX biosynthesis; 5-aminolevulinate from L-glutamyl-tRNA(Glu): step 2/2. The polypeptide is Glutamate-1-semialdehyde 2,1-aminomutase (Salmonella typhi).